A 391-amino-acid chain; its full sequence is DNA repair protein NreA (391 aa).

The C4-type zinc-finger motif lies at cysteine 6–cysteine 20. A PIP motif motif is present at residues glutamine 382 to phenylalanine 389.

Belongs to the Nre family. Interacts with the DNA polymerase sliding clamp (PCNA) via the PIP (PCNA-interacting peptide) motif.

Involved in DNA damage repair. The sequence is that of DNA repair protein NreA from Archaeoglobus fulgidus (strain ATCC 49558 / DSM 4304 / JCM 9628 / NBRC 100126 / VC-16).